Consider the following 133-residue polypeptide: Bacteriohemerythrin (133 aa).

Residues histidine 19, histidine 56, glutamate 60, histidine 75, histidine 79, histidine 115, and aspartate 120 each coordinate Fe cation.

Belongs to the hemerythrin family. Monomer.

Functionally, oxygen-binding protein. May be involved in a storage mechanism or for delivery to oxygen-requiring enzymes. The oxygen-binding site contains two iron atoms. This is Bacteriohemerythrin from Campylobacter jejuni subsp. jejuni serotype O:6 (strain 81116 / NCTC 11828).